Reading from the N-terminus, the 481-residue chain is ATP synthase subunit beta (481 aa).

167–174 (GGAGVGKT) is an ATP binding site.

This sequence belongs to the ATPase alpha/beta chains family. As to quaternary structure, F-type ATPases have 2 components, CF(1) - the catalytic core - and CF(0) - the membrane proton channel. CF(1) has five subunits: alpha(3), beta(3), gamma(1), delta(1), epsilon(1). CF(0) has three main subunits: a(1), b(2) and c(9-12). The alpha and beta chains form an alternating ring which encloses part of the gamma chain. CF(1) is attached to CF(0) by a central stalk formed by the gamma and epsilon chains, while a peripheral stalk is formed by the delta and b chains.

It is found in the cell membrane. It catalyses the reaction ATP + H2O + 4 H(+)(in) = ADP + phosphate + 5 H(+)(out). Produces ATP from ADP in the presence of a proton gradient across the membrane. The catalytic sites are hosted primarily by the beta subunits. The chain is ATP synthase subunit beta from Corynebacterium jeikeium (strain K411).